Consider the following 348-residue polypeptide: Ribonuclease H (348 aa).

The segment covering Asn54 to Ala65 has biased composition (polar residues). Residues Asn54–Arg81 are disordered. The 163-residue stretch at Tyr184–Ser346 folds into the RNase H type-1 domain. Asp193, Glu235, Asp264, and Asp338 together coordinate Mg(2+).

This sequence belongs to the RNase H family. Mg(2+) serves as cofactor.

It catalyses the reaction Endonucleolytic cleavage to 5'-phosphomonoester.. Functionally, endonuclease that specifically degrades the RNA of RNA-DNA hybrids. In Saccharomyces cerevisiae (strain ATCC 204508 / S288c) (Baker's yeast), this protein is Ribonuclease H (RNH1).